Here is a 45-residue protein sequence, read N- to C-terminus: Turripeptide OL11-like (45 aa).

Intrachain disulfides connect cysteine 1–cysteine 31, cysteine 5–cysteine 24, and cysteine 13–cysteine 45. In terms of domain architecture, Kazal-like spans 1 to 45 (CMTICTMEYWPVCGSDGKTYPNKCHLTSTACTSQKDITVLHEGKC).

This sequence belongs to the conopeptide P-like superfamily. Expressed by the venom duct.

It localises to the secreted. Acts as a neurotoxin by inhibiting an ion channel. May also act as a serine protease inhibitor, since it possess the kazal serine protease inhibitor signature. The protein is Turripeptide OL11-like of Lophiotoma albina (Sea snail).